A 195-amino-acid chain; its full sequence is Myelin-associated neurite-outgrowth inhibitor (195 aa).

Residues M1–K18 are Cytoplasmic-facing. The helical transmembrane segment at G19–P43 threads the bilayer. The Extracellular segment spans residues G44–N143. The helical transmembrane segment at G144–L163 threads the bilayer. Residues T164–W195 are Cytoplasmic-facing.

This sequence belongs to the FAM168 family.

Its subcellular location is the cytoplasm. It localises to the perinuclear region. The protein localises to the cell membrane. The protein resides in the cell projection. It is found in the axon. Its function is as follows. Inhibitor of neuronal axonal outgrowth. This is Myelin-associated neurite-outgrowth inhibitor (fam168b) from Danio rerio (Zebrafish).